Reading from the N-terminus, the 123-residue chain is Fluoride-specific ion channel FluC (123 aa).

The next 4 membrane-spanning stretches (helical) occupy residues 5–25 (VWVA…YKFV), 33–53 (LATF…IGAF), 62–82 (LKLA…TFAA), and 94–114 (ITAF…VALG). Residues Gly-72 and Ser-75 each contribute to the Na(+) site.

Belongs to the fluoride channel Fluc/FEX (TC 1.A.43) family.

It localises to the cell inner membrane. It catalyses the reaction fluoride(in) = fluoride(out). Na(+) is not transported, but it plays an essential structural role and its presence is essential for fluoride channel function. Functionally, fluoride-specific ion channel. Important for reducing fluoride concentration in the cell, thus reducing its toxicity. The protein is Fluoride-specific ion channel FluC of Ignicoccus hospitalis (strain KIN4/I / DSM 18386 / JCM 14125).